The sequence spans 309 residues: Cytochrome c1, heme protein, mitochondrial (309 aa).

The N-terminal 61 residues, 1–61, are a transit peptide targeting the mitochondrion; that stretch reads MFSNLSKRWA…LYADSLTAEA (61 aa). The Mitochondrial intermembrane portion of the chain corresponds to 62–262; sequence MTAAEHGLHA…TFLNWCAEPE (201 aa). Residues 88-241 form the Cytochrome c domain; that stretch reads ASIRRGYQVY…DMVEYEDGTP (154 aa). Residues Cys101, Cys104, and His105 each contribute to the heme c site. The span at 131-140 shows a compositional bias: acidic residues; sequence EFEYDDEPDE. Positions 131–168 are disordered; sequence EFEYDDEPDEQGNPKKRPGKLSDYIPGPYPNEQAARAA. Met225 is a binding site for heme c. A helical transmembrane segment spans residues 263–296; it reads HDERKRLGLKTVIILSSLYLLSIWVKKFKWAGIK. At 297 to 309 the chain is on the mitochondrial matrix side; that stretch reads TRKFVFNPPKPRK.

The protein belongs to the cytochrome c family. In terms of assembly, component of the ubiquinol-cytochrome c oxidoreductase (cytochrome b-c1 complex, complex III, CIII), a multisubunit enzyme composed of 10 subunits. The complex is composed of 3 respiratory subunits cytochrome b (COB), cytochrome c1 (CYT1) and Rieske protein (RIP1), 2 core protein subunits COR1 and QCR2, and 5 low-molecular weight protein subunits QCR6, QCR7, QCR8, QCR9 and QCR10. The complex exists as an obligatory dimer and forms supercomplexes (SCs) in the inner mitochondrial membrane with a monomer or a dimer of cytochrome c oxidase (complex IV, CIV), resulting in 2 different assemblies (supercomplexes III(2)IV and III(2)IV(2)). CYT1 interacts with COX5A at the CIII-CIV interface. Heme c is required as a cofactor.

It is found in the mitochondrion inner membrane. It catalyses the reaction a quinol + 2 Fe(III)-[cytochrome c](out) = a quinone + 2 Fe(II)-[cytochrome c](out) + 2 H(+)(out). Functionally, component of the ubiquinol-cytochrome c oxidoreductase, a multisubunit transmembrane complex that is part of the mitochondrial electron transport chain which drives oxidative phosphorylation. The respiratory chain contains 3 multisubunit complexes succinate dehydrogenase (complex II, CII), ubiquinol-cytochrome c oxidoreductase (cytochrome b-c1 complex, complex III, CIII) and cytochrome c oxidase (complex IV, CIV), that cooperate to transfer electrons derived from NADH and succinate to molecular oxygen, creating an electrochemical gradient over the inner membrane that drives transmembrane transport and the ATP synthase. The cytochrome b-c1 complex catalyzes electron transfer from ubiquinol to cytochrome c, linking this redox reaction to translocation of protons across the mitochondrial inner membrane, with protons being carried across the membrane as hydrogens on the quinol. In the process called Q cycle, 2 protons are consumed from the matrix, 4 protons are released into the intermembrane space and 2 electrons are passed to cytochrome c. Cytochrome c1 is a catalytic core subunit containing a c-type heme. It transfers electrons from the [2Fe-2S] iron-sulfur cluster of the Rieske protein to cytochrome c. The protein is Cytochrome c1, heme protein, mitochondrial (CYT1) of Saccharomyces cerevisiae (strain ATCC 204508 / S288c) (Baker's yeast).